The following is a 177-amino-acid chain: Peptide methionine sulfoxide reductase MsrA (177 aa).

Cys-15 is an active-site residue.

This sequence belongs to the MsrA Met sulfoxide reductase family.

It catalyses the reaction L-methionyl-[protein] + [thioredoxin]-disulfide + H2O = L-methionyl-(S)-S-oxide-[protein] + [thioredoxin]-dithiol. The catalysed reaction is [thioredoxin]-disulfide + L-methionine + H2O = L-methionine (S)-S-oxide + [thioredoxin]-dithiol. Its function is as follows. Has an important function as a repair enzyme for proteins that have been inactivated by oxidation. Catalyzes the reversible oxidation-reduction of methionine sulfoxide in proteins to methionine. The sequence is that of Peptide methionine sulfoxide reductase MsrA from Listeria monocytogenes serotype 4b (strain CLIP80459).